The chain runs to 163 residues: Nucleotide-binding protein Mmcs_0777 (163 aa).

The protein belongs to the YajQ family.

Nucleotide-binding protein. The chain is Nucleotide-binding protein Mmcs_0777 from Mycobacterium sp. (strain MCS).